Reading from the N-terminus, the 452-residue chain is MGACLGACSLLSCASCLCGSAPCILCSCCPCSHNSTLSRLFFTVFLFLGVLVCVIMLSPGVESQLYKLPWVCNEGTGSHVVLQGHIDCGSLLGHRAVYRMCFAMAAFFFLFSLLMVCVRSSRDPRAAIQNGFWFFKFLIFVGITVGAFYIPDGSFSNIWFYFGVVGSFIFLLIQLLLLIDFAHSWNQRWLCKAEECDSRAWYAGLFFFTLLFYALSITAVALLFVYYTQPGACYEGKVFIGLNLTLCVCVSIVAILPKIQDAQPNSGLLQASVITLYTMFVTWLALSNVPDQKCNPHLLTHFGNGTVLAGPEGYETHWWDAPSIVGLVVFILCTVFISLRSSDHRQVNSLMQTEECPPVLDATQQQVVSEGRAFDNEQDGVTYSYSFFHLCLVLASVHIMMTLTNWYRPGETRKMISTWTAVWVKICASWTGLLLYLWTLVAPLLLPNRDFS.

Transmembrane regions (helical) follow at residues Leu-5–Leu-25, Phe-41–Val-61, Ala-96–Val-116, Gly-131–Pro-151, Ile-158–Leu-178, Leu-205–Val-225, Gly-236–Leu-256, Ser-266–Leu-286, Trp-319–Leu-339, Phe-387–Tyr-407, and Ile-426–Leu-446.

It belongs to the TDE1 family.

The protein resides in the cell membrane. The catalysed reaction is a 1,2-diacyl-sn-glycero-3-phospho-L-serine(in) = a 1,2-diacyl-sn-glycero-3-phospho-L-serine(out). It catalyses the reaction a 1,2-diacyl-sn-glycero-3-phosphocholine(in) = a 1,2-diacyl-sn-glycero-3-phosphocholine(out). It carries out the reaction a 1,2-diacyl-sn-glycero-3-phosphoethanolamine(in) = a 1,2-diacyl-sn-glycero-3-phosphoethanolamine(out). In terms of biological role, non-ATP-dependent, non-specific lipid transporter for phosphatidylserine, phosphatidylcholine, and phosphatidylethanolamine. Functions as a scramblase that flips lipids in both directions across the membrane. In contrast to SERINC3 and SERINC5, has no effect on gammaretrovirus particles infectivity. The protein is Serine incorporator 2 (SERINC2) of Bos taurus (Bovine).